A 302-amino-acid polypeptide reads, in one-letter code: Mitochondrial adapter protein MCP1 (302 aa).

A disordered region spans residues 1–35 (MIKLHEVPPEPVDPASLPHDVNAHSPEGDGNPDKR). Residues 1-61 (MIKLHEVPPE…RFLWNCQKIS (61 aa)) lie on the Cytoplasmic side of the membrane. Positions 4-12 (LHEVPPEPV) match the PxP motif. Residues 62–82 (VLPMALYFPLHAANTLITPAV) form a helical membrane-spanning segment. At 83–100 (SPDSAPDDVLMMVREILP) the chain is on the mitochondrial intermembrane side. A helical transmembrane segment spans residues 101 to 121 (SITTKLLVAGITLHVSAGVLL). Topologically, residues 122 to 173 (RIVNNWNKPRRNRHRHLKISAEQDLSQDSIGLTGGISGYLFGLYKTFRIPPQ) are cytoplasmic. A helical transmembrane segment spans residues 174–194 (VISGYILVPVLIYHLLIMKWV). At 195–219 (PNSISTEVDFASIKQLLSSKNRWWK) the chain is on the mitochondrial intermembrane side. Residues 220–240 (WLGGLVPLAILLESGVYHIGS) form a helical membrane-spanning segment. Topologically, residues 241-258 (GLCRYFGVRKMTSRKKWS) are cytoplasmic. A helical transmembrane segment spans residues 259-276 (TAINLLTLVGFVSLIRLM). Residues 277 to 302 (KEDSTKLGPNQFESIFKKIRLLLHVN) are Mitochondrial intermembrane-facing.

As to quaternary structure, interacts (via PxP motif) with VPS13 (via SHR-BD domain).

Its subcellular location is the mitochondrion outer membrane. Recruits the lipid transfer protein Vps13 to mitochondria thereby promoting vacuole-mitochondria contacts. Involved in mitochondrial lipid homeostasis. The polypeptide is Mitochondrial adapter protein MCP1 (Saccharomyces cerevisiae (strain ATCC 204508 / S288c) (Baker's yeast)).